The chain runs to 557 residues: Potassium-transporting ATPase potassium-binding subunit (557 aa).

A run of 12 helical transmembrane segments spans residues 5-25 (GFLL…PLGS), 63-83 (LCAI…MLLG), 132-152 (GLTV…FALI), 170-190 (LLRI…LFFI), 253-273 (FVQM…FGEV), 283-303 (LLWA…WAEV), 329-349 (VLVS…AVIA), 356-376 (ALGG…FGGV), 379-399 (GLYG…LMIG), 416-436 (LTAL…ALAM), 484-504 (LLAF…MAIA), and 526-546 (LFVG…FIPA).

This sequence belongs to the KdpA family. The system is composed of three essential subunits: KdpA, KdpB and KdpC.

It localises to the cell inner membrane. In terms of biological role, part of the high-affinity ATP-driven potassium transport (or Kdp) system, which catalyzes the hydrolysis of ATP coupled with the electrogenic transport of potassium into the cytoplasm. This subunit binds the periplasmic potassium ions and delivers the ions to the membrane domain of KdpB through an intramembrane tunnel. The sequence is that of Potassium-transporting ATPase potassium-binding subunit from Escherichia coli O157:H7.